Reading from the N-terminus, the 205-residue chain is GTP cyclohydrolase-2 (205 aa).

Position 49-53 (49-53) interacts with GTP; that stretch reads RLHSE. Residues Cys54, Cys65, and Cys67 each contribute to the Zn(2+) site. GTP contacts are provided by residues Gln70, 92–94, and Thr114; that span reads EGR. Asp126 (proton acceptor) is an active-site residue. The active-site Nucleophile is Arg128. GTP-binding residues include Thr149 and Lys154.

This sequence belongs to the GTP cyclohydrolase II family. The cofactor is Zn(2+).

It carries out the reaction GTP + 4 H2O = 2,5-diamino-6-hydroxy-4-(5-phosphoribosylamino)-pyrimidine + formate + 2 phosphate + 3 H(+). It functions in the pathway cofactor biosynthesis; riboflavin biosynthesis; 5-amino-6-(D-ribitylamino)uracil from GTP: step 1/4. Catalyzes the conversion of GTP to 2,5-diamino-6-ribosylamino-4(3H)-pyrimidinone 5'-phosphate (DARP), formate and pyrophosphate. This Pseudomonas paraeruginosa (strain DSM 24068 / PA7) (Pseudomonas aeruginosa (strain PA7)) protein is GTP cyclohydrolase-2.